The following is a 445-amino-acid chain: Chromosome partition protein MukF (445 aa).

The segment at 213 to 241 (LSETSNTLKELQDTLQAAGDELQTQILDI) is leucine-zipper.

The protein belongs to the MukF family. In terms of assembly, interacts, and probably forms a ternary complex, with MukE and MukB via its C-terminal region. The complex formation is stimulated by calcium or magnesium. It is required for an interaction between MukE and MukB.

The protein resides in the cytoplasm. The protein localises to the nucleoid. Its function is as follows. Involved in chromosome condensation, segregation and cell cycle progression. May participate in facilitating chromosome segregation by condensation DNA from both sides of a centrally located replisome during cell division. Not required for mini-F plasmid partitioning. Probably acts via its interaction with MukB and MukE. Overexpression results in anucleate cells. It has a calcium binding activity. In Vibrio vulnificus (strain CMCP6), this protein is Chromosome partition protein MukF.